A 151-amino-acid polypeptide reads, in one-letter code: Small ribosomal subunit protein uS11 (151 aa).

It belongs to the universal ribosomal protein uS11 family.

This chain is Small ribosomal subunit protein uS11 (RPS14), found in Podocoryna carnea (Hydrozoan).